The chain runs to 166 residues: MVGSGISALGLLLLMQGSVDANGIQGFFYPWSCEGDVWDRESCGGQAAIENPNLCLRLRCCYRDGVCYHQRPDENMRRKHMWALGWTCGSLLFLITSICLFWWARRQDMLHLPRFLHRKCSKLSKTVSSLSKDRRSANKSTTVLQSPGGEVETAAAVSGEDTGGEE.

Residues 1 to 21 form the signal peptide; that stretch reads MVGSGISALGLLLLMQGSVDA. At 22–81 the chain is on the extracellular side; that stretch reads NGIQGFFYPWSCEGDVWDRESCGGQAAIENPNLCLRLRCCYRDGVCYHQRPDENMRRKHM. Positions 31–71 constitute a P-type domain; the sequence is WSCEGDVWDRESCGGQAAIENPNLCLRLRCCYRDGVCYHQR. 3 cysteine pairs are disulfide-bonded: Cys-33–Cys-61, Cys-43–Cys-60, and Cys-55–Cys-67. The helical transmembrane segment at 82 to 102 threads the bilayer; it reads WALGWTCGSLLFLITSICLFW. At 103–166 the chain is on the cytoplasmic side; that stretch reads WARRQDMLHL…VSGEDTGGEE (64 aa). Positions 130 to 166 are disordered; it reads LSKDRRSANKSTTVLQSPGGEVETAAAVSGEDTGGEE.

As to expression, detected in testis and in a mixture of spermatogenic cells at various stages (testicular germ cells). Not detected in heart, brain, spleen, lung, liver, skeletal muscle and kidney.

It is found in the membrane. In Mus musculus (Mouse), this protein is Transmembrane protein 190 (Tmem190).